Consider the following 323-residue polypeptide: Annexin A3 (323 aa).

Alanine 2 carries the N-acetylalanine modification. Annexin repeat units follow at residues 18–89 (FSPS…ALVT), 90–161 (PPAV…TLAD), 173–245 (HLAK…AIVN), and 249–320 (NTPA…KICG). Threonine 267 carries the phosphothreonine modification.

Belongs to the annexin family.

Its function is as follows. Inhibitor of phospholipase A2, also possesses anti-coagulant properties. Also cleaves the cyclic bond of inositol 1,2-cyclic phosphate to form inositol 1-phosphate. The sequence is that of Annexin A3 (ANXA3) from Homo sapiens (Human).